Reading from the N-terminus, the 476-residue chain is Arginine biosynthesis bifunctional protein ArgJ, mitochondrial (476 aa).

Substrate is bound by residues T193, K219, T237, E337, N471, and S476. T237 acts as the Nucleophile in catalysis.

The protein belongs to the ArgJ family. As to quaternary structure, heterodimer of an alpha and a beta chain. Post-translationally, the alpha and beta chains are autoproteolytically processed from a single precursor protein within the mitochondrion.

The protein resides in the mitochondrion matrix. The catalysed reaction is N(2)-acetyl-L-ornithine + L-glutamate = N-acetyl-L-glutamate + L-ornithine. It carries out the reaction L-glutamate + acetyl-CoA = N-acetyl-L-glutamate + CoA + H(+). The protein operates within amino-acid biosynthesis; L-arginine biosynthesis; L-ornithine and N-acetyl-L-glutamate from L-glutamate and N(2)-acetyl-L-ornithine (cyclic): step 1/1. It participates in amino-acid biosynthesis; L-arginine biosynthesis; N(2)-acetyl-L-ornithine from L-glutamate: step 1/4. Its function is as follows. Catalyzes two activities which are involved in the cyclic version of arginine biosynthesis: the synthesis of acetylglutamate from glutamate and acetyl-CoA, and of ornithine by transacetylation between acetylornithine and glutamate. This Cryptococcus neoformans var. neoformans serotype D (strain B-3501A) (Filobasidiella neoformans) protein is Arginine biosynthesis bifunctional protein ArgJ, mitochondrial.